A 187-amino-acid chain; its full sequence is NADPH-dependent 3-demethoxyubiquinone 3-hydroxylase, mitochondrial (187 aa).

The N-terminal 8 residues, 1-8, are a transit peptide targeting the mitochondrion; it reads MFRVITRG. K21 provides a ligand contact to NADH. 2 repeat units span residues 28-99 and 100-187. The interval 28–187 is 2 X approximate tandem repeats; the sequence is AGELGADRIY…KGAIAIAEKI (160 aa). Fe cation-binding residues include E30, E60, H63, E112, E148, and H151. K186 provides a ligand contact to NADH.

It belongs to the COQ7 family. Component of a multi-subunit COQ enzyme complex. It depends on Fe cation as a cofactor.

The protein resides in the mitochondrion inner membrane. It localises to the mitochondrion. The protein localises to the nucleus. It catalyses the reaction a 5-methoxy-2-methyl-3-(all-trans-polyprenyl)benzoquinone + NADH + O2 = a 3-demethylubiquinone + NAD(+) + H2O. It functions in the pathway cofactor biosynthesis; ubiquinone biosynthesis. Catalyzes the hydroxylation of the 5-methoxy-2-methyl-3-(all-trans-polyprenyl)benzoquinone at the C6 position and participates in the biosynthesis of ubiquinone. Catalyzes the reaction through a substrate-mediated reduction pathway, whereby NADH shuttles electrons to 5-methoxy-2-methyl-3-(all-trans-decaprenyl)benzoquinone, which then transfers the electrons to the two Fe(3+) centers. The binding of 5-methoxy-2-methyl-3-(all-trans-polyprenyl)benzoquinone (DMQn) mediates reduction of the diiron center by nicotinamide adenine dinucleotide (NADH) and initiates oxygen activation for subsequent DMQ hydroxylation. Also has a structural role in the COQ enzyme complex, stabilizing other COQ polypeptides. Involved in lifespan determination in a ubiquinone-independent manner. Plays a role in modulating mitochondrial stress responses, acting in the nucleus, perhaps via regulating gene expression, independent of its characterized mitochondrial function in ubiquinone biosynthesis. Plays a role in modulating polyribosome formation. The sequence is that of NADPH-dependent 3-demethoxyubiquinone 3-hydroxylase, mitochondrial from Caenorhabditis elegans.